Reading from the N-terminus, the 103-residue chain is Ig kappa-b5 chain C region (103 aa).

Residues 5–99 (PTVLIFPPAP…GAGSVVQSFS (95 aa)) enclose the Ig-like domain. An intrachain disulfide couples Cys26 to Cys85.

In Oryctolagus cuniculus (Rabbit), this protein is Ig kappa-b5 chain C region.